The sequence spans 932 residues: Protocadherin gamma-A7 (932 aa).

An N-terminal signal peptide occupies residues 1-28 (MAAQPRGGDCRGFVLLSILLGTPWEAWA). Cadherin domains follow at residues 29-133 (GRIL…VPRF), 134-242 (LTEE…TPVF), 243-347 (SLPQ…APEV), 348-452 (TMTS…PPTF), 453-562 (PHSS…PPEI), and 570-682 (DGST…EPSD). The Extracellular portion of the chain corresponds to 29–692 (GRILYSVSEE…GPYNYDLTLY (664 aa)). N-linked (GlcNAc...) asparagine glycosylation is found at N419 and N545. Residues 693–713 (LVVAVAAVSCVFLAFVLVLLA) traverse the membrane as a helical segment. Over 714–932 (LRLRRWHKSR…KKKSGKKEKK (219 aa)) the chain is Cytoplasmic. Disordered regions lie at residues 804–841 (VPSIQQAPPNTDWRFSQAQRPGTSGSQNGDDTGTWPNN) and 902–932 (ATLTNAAGKRDGKAPAGGNGNKKKSGKKEKK). The span at 806–841 (SIQQAPPNTDWRFSQAQRPGTSGSQNGDDTGTWPNN) shows a compositional bias: polar residues. A compositionally biased stretch (basic residues) spans 922–932 (NKKKSGKKEKK).

It localises to the cell membrane. Its function is as follows. Potential calcium-dependent cell-adhesion protein. May be involved in the establishment and maintenance of specific neuronal connections in the brain. The sequence is that of Protocadherin gamma-A7 (PCDHGA7) from Pan troglodytes (Chimpanzee).